A 126-amino-acid chain; its full sequence is Holo-[acyl-carrier-protein] synthase (126 aa).

Mg(2+)-binding residues include D9 and E58.

The protein belongs to the P-Pant transferase superfamily. AcpS family. Mg(2+) serves as cofactor.

The protein localises to the cytoplasm. The enzyme catalyses apo-[ACP] + CoA = holo-[ACP] + adenosine 3',5'-bisphosphate + H(+). Functionally, transfers the 4'-phosphopantetheine moiety from coenzyme A to a Ser of acyl-carrier-protein. The chain is Holo-[acyl-carrier-protein] synthase from Photorhabdus laumondii subsp. laumondii (strain DSM 15139 / CIP 105565 / TT01) (Photorhabdus luminescens subsp. laumondii).